We begin with the raw amino-acid sequence, 75 residues long: Small ribosomal subunit protein bS18 (75 aa).

Belongs to the bacterial ribosomal protein bS18 family. As to quaternary structure, part of the 30S ribosomal subunit. Forms a tight heterodimer with protein bS6.

Binds as a heterodimer with protein bS6 to the central domain of the 16S rRNA, where it helps stabilize the platform of the 30S subunit. In Buchnera aphidicola subsp. Acyrthosiphon pisum (strain 5A), this protein is Small ribosomal subunit protein bS18.